The sequence spans 210 residues: Flagellar transcriptional regulator FlhC (210 aa).

Residues Cys-144, Cys-147, Cys-164, and Cys-167 each contribute to the Zn(2+) site.

This sequence belongs to the FlhC family. In terms of assembly, heterohexamer composed of two FlhC and four FlhD subunits. Each FlhC binds a FlhD dimer, forming a heterotrimer, and a hexamer assembles by dimerization of two heterotrimers. It depends on Zn(2+) as a cofactor.

It localises to the cytoplasm. Functions in complex with FlhD as a master transcriptional regulator that regulates transcription of several flagellar and non-flagellar operons by binding to their promoter region. Activates expression of class 2 flagellar genes, including fliA, which is a flagellum-specific sigma factor that turns on the class 3 genes. Also regulates genes whose products function in a variety of physiological pathways. The sequence is that of Flagellar transcriptional regulator FlhC from Cupriavidus pinatubonensis (strain JMP 134 / LMG 1197) (Cupriavidus necator (strain JMP 134)).